Reading from the N-terminus, the 308-residue chain is 34.2 kDa protein in rubredoxin operon (308 aa).

Cys-136 and Cys-139 are joined by a disulfide. An FAD-binding site is contributed by 268–278 (TNIKGVFAAGD).

It belongs to the class-II pyridine nucleotide-disulfide oxidoreductase family.

The protein is 34.2 kDa protein in rubredoxin operon of Clostridium pasteurianum.